We begin with the raw amino-acid sequence, 51 residues long: Large ribosomal subunit protein eL39 (51 aa).

It belongs to the eukaryotic ribosomal protein eL39 family.

In terms of biological role, binds specifically to a region in 26S rRNA near the subunit interface. This Sulfolobus acidocaldarius (strain ATCC 33909 / DSM 639 / JCM 8929 / NBRC 15157 / NCIMB 11770) protein is Large ribosomal subunit protein eL39 (rpl39e).